A 333-amino-acid polypeptide reads, in one-letter code: UDP-3-O-acylglucosamine N-acyltransferase (333 aa).

Residue H225 is the Proton acceptor of the active site.

This sequence belongs to the transferase hexapeptide repeat family. LpxD subfamily. In terms of assembly, homotrimer.

The enzyme catalyses a UDP-3-O-[(3R)-3-hydroxyacyl]-alpha-D-glucosamine + a (3R)-hydroxyacyl-[ACP] = a UDP-2-N,3-O-bis[(3R)-3-hydroxyacyl]-alpha-D-glucosamine + holo-[ACP] + H(+). Its pathway is bacterial outer membrane biogenesis; LPS lipid A biosynthesis. Functionally, catalyzes the N-acylation of UDP-3-O-acylglucosamine using 3-hydroxyacyl-ACP as the acyl donor. Is involved in the biosynthesis of lipid A, a phosphorylated glycolipid that anchors the lipopolysaccharide to the outer membrane of the cell. The protein is UDP-3-O-acylglucosamine N-acyltransferase of Paracidovorax citrulli (strain AAC00-1) (Acidovorax citrulli).